Reading from the N-terminus, the 542-residue chain is Chaperonin GroEL (542 aa).

ATP contacts are provided by residues T29–P32, K50, D86–T90, G414, and D494.

It belongs to the chaperonin (HSP60) family. As to quaternary structure, forms a cylinder of 14 subunits composed of two heptameric rings stacked back-to-back. Interacts with the co-chaperonin GroES.

It is found in the cytoplasm. It carries out the reaction ATP + H2O + a folded polypeptide = ADP + phosphate + an unfolded polypeptide.. Functionally, together with its co-chaperonin GroES, plays an essential role in assisting protein folding. The GroEL-GroES system forms a nano-cage that allows encapsulation of the non-native substrate proteins and provides a physical environment optimized to promote and accelerate protein folding. The polypeptide is Chaperonin GroEL (Cytophaga hutchinsonii (strain ATCC 33406 / DSM 1761 / CIP 103989 / NBRC 15051 / NCIMB 9469 / D465)).